The primary structure comprises 820 residues: Chitinase A (820 aa).

Positions 1 to 21 (MKLNKITSYIGFALLSGGALA) are cleaved as a signal peptide. A GH18 domain is found at 158-588 (RVTGAYFVEW…NAMYDGLTAG (431 aa)). The Proton donor role is filled by Glu313.

It belongs to the glycosyl hydrolase 18 family. Chitinase class II subfamily.

It carries out the reaction Random endo-hydrolysis of N-acetyl-beta-D-glucosaminide (1-&gt;4)-beta-linkages in chitin and chitodextrins.. Stimulated by magnesium ions; inhibited by N-bromosuccinimide and 2-hydroxy-5-nitrobenzyl bromide. The protein is Chitinase A (chiA) of Pseudoalteromonas piscicida.